The sequence spans 203 residues: Holliday junction branch migration complex subunit RuvA (203 aa).

The interval Met1 to Tyr63 is domain I. Residues Asp64–Gly142 are domain II. Residues Gln143–Asp153 form a flexible linker region. Residues Asp153–Lys203 form a domain III region.

It belongs to the RuvA family. In terms of assembly, homotetramer. Forms an RuvA(8)-RuvB(12)-Holliday junction (HJ) complex. HJ DNA is sandwiched between 2 RuvA tetramers; dsDNA enters through RuvA and exits via RuvB. An RuvB hexamer assembles on each DNA strand where it exits the tetramer. Each RuvB hexamer is contacted by two RuvA subunits (via domain III) on 2 adjacent RuvB subunits; this complex drives branch migration. In the full resolvosome a probable DNA-RuvA(4)-RuvB(12)-RuvC(2) complex forms which resolves the HJ.

It localises to the cytoplasm. Functionally, the RuvA-RuvB-RuvC complex processes Holliday junction (HJ) DNA during genetic recombination and DNA repair, while the RuvA-RuvB complex plays an important role in the rescue of blocked DNA replication forks via replication fork reversal (RFR). RuvA specifically binds to HJ cruciform DNA, conferring on it an open structure. The RuvB hexamer acts as an ATP-dependent pump, pulling dsDNA into and through the RuvAB complex. HJ branch migration allows RuvC to scan DNA until it finds its consensus sequence, where it cleaves and resolves the cruciform DNA. The polypeptide is Holliday junction branch migration complex subunit RuvA (Latilactobacillus sakei subsp. sakei (strain 23K) (Lactobacillus sakei subsp. sakei)).